Consider the following 357-residue polypeptide: Probable dual-specificity RNA methyltransferase RlmN (357 aa).

Residue glutamate 95 is the Proton acceptor of the active site. The Radical SAM core domain maps to 105-343 (KKSSYTLCLS…VSIREERGSD (239 aa)). A disulfide bridge links cysteine 112 with cysteine 348. [4Fe-4S] cluster is bound by residues cysteine 119, cysteine 123, and cysteine 126. Residues 174-175 (GE), serine 206, 229-231 (SLH), and asparagine 305 contribute to the S-adenosyl-L-methionine site. The S-methylcysteine intermediate role is filled by cysteine 348.

Belongs to the radical SAM superfamily. RlmN family. It depends on [4Fe-4S] cluster as a cofactor.

The protein resides in the cytoplasm. The enzyme catalyses adenosine(2503) in 23S rRNA + 2 reduced [2Fe-2S]-[ferredoxin] + 2 S-adenosyl-L-methionine = 2-methyladenosine(2503) in 23S rRNA + 5'-deoxyadenosine + L-methionine + 2 oxidized [2Fe-2S]-[ferredoxin] + S-adenosyl-L-homocysteine. It catalyses the reaction adenosine(37) in tRNA + 2 reduced [2Fe-2S]-[ferredoxin] + 2 S-adenosyl-L-methionine = 2-methyladenosine(37) in tRNA + 5'-deoxyadenosine + L-methionine + 2 oxidized [2Fe-2S]-[ferredoxin] + S-adenosyl-L-homocysteine. Specifically methylates position 2 of adenine 2503 in 23S rRNA and position 2 of adenine 37 in tRNAs. This is Probable dual-specificity RNA methyltransferase RlmN from Syntrophomonas wolfei subsp. wolfei (strain DSM 2245B / Goettingen).